Reading from the N-terminus, the 176-residue chain is Centromere protein R (176 aa).

Lys8 participates in a covalent cross-link: Glycyl lysine isopeptide (Lys-Gly) (interchain with G-Cter in SUMO2). Position 17 is a phosphoserine (Ser17). Residues 20 to 50 (PSKIMRKKSITAFSPTTGTYQLSPFSSPRTP) are DD1. Lys22 is covalently cross-linked (Glycyl lysine isopeptide (Lys-Gly) (interchain with G-Cter in SUMO2)). Residue Ser28 is modified to Phosphoserine. The segment covering 34-48 (PTTGTYQLSPFSSPR) has biased composition (polar residues). A disordered region spans residues 34-80 (PTTGTYQLSPFSSPRTPKEQEHRDGPSNGTRKWSVLSSPARQDSTVK). Positions 49–58 (TPKEQEHRDG) are enriched in basic and acidic residues. Polar residues predominate over residues 60 to 80 (SNGTRKWSVLSSPARQDSTVK). The short motif at 63–66 (TRKW) is the Nuclear localization signal element. A Phosphoserine modification is found at Ser71. Positions 82-112 (SDGFMMLLSKIERSSEKTMEIMKNLSSLQAL) form a coiled coil. Positions 118-122 (LEDLL) match the LXXLL motif motif. Positions 171 to 175 (LKAIL) match the LXXIL motif motif.

In terms of assembly, homodimer; mediated by the coiled coil domain. Interacts with CCNA2 and MTA1. Interacts with NFKB1 NF-kappa-B subunit. Component of the CENPA-CAD complex, composed of CENPI, CENPK, CENPL, CENPO, CENPP, CENPQ, CENPR and CENPS. The CENPA-CAD complex interacts with the CENPA-NAC complex, at least composed of CENPA, CENPC, CENPH, CENPM, CENPN, CENPT and CENPU. Interacts with TASOR.

It is found in the nucleus. The protein resides in the chromosome. Its subcellular location is the centromere. The protein localises to the kinetochore. In terms of biological role, transcription coregulator that can have both coactivator and corepressor functions. Involved in the coactivation of nuclear receptors for retinoid X (RXRs) and thyroid hormone (TRs) in a ligand-dependent fashion. In contrast, it does not coactivate nuclear receptors for retinoic acid, vitamin D, progesterone receptor, nor glucocorticoid. Acts as a coactivator for estrogen receptor alpha. Acts as a transcriptional corepressor via its interaction with the NFKB1 NF-kappa-B subunit, possibly by interfering with the transactivation domain of NFKB1. Induces apoptosis in breast cancer cells, but not in other cancer cells, via a caspase-2 mediated pathway that involves mitochondrial membrane permeabilization but does not require other caspases. May also act as an inhibitor of cyclin A-associated kinase. Also acts a component of the CENPA-CAD (nucleosome distal) complex, a complex recruited to centromeres which is involved in assembly of kinetochore proteins, mitotic progression and chromosome segregation. May be involved in incorporation of newly synthesized CENPA into centromeres via its interaction with the CENPA-NAC complex. This chain is Centromere protein R (Itgb3bp), found in Rattus norvegicus (Rat).